The following is a 242-amino-acid chain: Biosynthetic peptidoglycan transglycosylase (242 aa).

Residues 19-39 traverse the membrane as a helical segment; it reads LMVVLAIFWGGGIALFSVAPV.

This sequence belongs to the glycosyltransferase 51 family.

It localises to the cell inner membrane. It catalyses the reaction [GlcNAc-(1-&gt;4)-Mur2Ac(oyl-L-Ala-gamma-D-Glu-L-Lys-D-Ala-D-Ala)](n)-di-trans,octa-cis-undecaprenyl diphosphate + beta-D-GlcNAc-(1-&gt;4)-Mur2Ac(oyl-L-Ala-gamma-D-Glu-L-Lys-D-Ala-D-Ala)-di-trans,octa-cis-undecaprenyl diphosphate = [GlcNAc-(1-&gt;4)-Mur2Ac(oyl-L-Ala-gamma-D-Glu-L-Lys-D-Ala-D-Ala)](n+1)-di-trans,octa-cis-undecaprenyl diphosphate + di-trans,octa-cis-undecaprenyl diphosphate + H(+). Its pathway is cell wall biogenesis; peptidoglycan biosynthesis. Functionally, peptidoglycan polymerase that catalyzes glycan chain elongation from lipid-linked precursors. The protein is Biosynthetic peptidoglycan transglycosylase of Escherichia coli O45:K1 (strain S88 / ExPEC).